Here is a 475-residue protein sequence, read N- to C-terminus: B-type cell cycle switch protein ccs52A (475 aa).

The segment at 1–29 (MDGTGNRNPPPTSTVGDNSPPPEPSPESL) is disordered. The PEST motif motif lies at 7–28 (RNPPPTSTVGDNSPPPEPSPES). Ser-43 and Ser-45 each carry phosphoserine. The C-box motif lies at 51 to 57 (DRFIPSR). Residues 80-91 (AYTTLLRTALFG) carry the CSM motif motif. Position 99 is a phosphothreonine (Thr-99). 2 positions are modified to phosphoserine: Ser-144 and Ser-155. WD repeat units follow at residues 166–203 (QDDF…VTKL), 207–246 (GVDD…KIRS), 249–289 (GHRL…SKLS), 290–329 (GHKS…PVLK), 332–374 (EHTA…HLSC), 376–417 (DTGS…KLAT), and 420–459 (GHTY…KSQN). Residue Ser-454 is modified to Phosphoserine.

This sequence belongs to the WD repeat CDC20/Fizzy family. Mostly expressed in nodules, and, to a lower extent, in root tips, stems, hypocotyls, leaves, flower buds and flowers.

The protein resides in the nucleus. The protein operates within protein modification; protein ubiquitination. Component of the anaphase promoting complex/cyclosome (APC/C), a cell cycle-regulated E3 ubiquitin-protein ligase complex that controls progression through mitosis and the G1 phase of the cell cycle. Required to switch form cell proliferation to cell differentiation, endoreduplication and ploidy-dependent cell enlargement, including during nodulation, before nodule differentiation. Involved in root-knot nematode Meloidogyne incognita giant cells formation. The polypeptide is B-type cell cycle switch protein ccs52A (Medicago truncatula (Barrel medic)).